Consider the following 412-residue polypeptide: G-protein coupled receptor homolog UL33 (412 aa).

At Met-1–Glu-35 the chain is on the virion surface side. 3 N-linked (GlcNAc...) asparagine; by host glycosylation sites follow: Asn-7, Asn-19, and Asn-23. A helical transmembrane segment spans residues Ala-36–Thr-56. Residues Gln-57–Asn-80 are Intravirion-facing. The chain crosses the membrane as a helical span at residues Phe-81–Ser-101. Residues Val-102–Lys-106 are Virion surface-facing. Cys-105 and Cys-188 are oxidised to a cystine. The chain crosses the membrane as a helical span at residues Phe-107–Ala-127. Residues Ala-128–Thr-147 lie on the Intravirion side of the membrane. A helical transmembrane segment spans residues Tyr-148–Tyr-168. The Virion surface segment spans residues Thr-169–Val-206. A helical transmembrane segment spans residues Leu-207–Phe-227. The Intravirion segment spans residues Tyr-228–Thr-244. Residues Phe-245 to Ile-265 traverse the membrane as a helical segment. Residues Phe-266–Arg-292 lie on the Virion surface side of the membrane. Residues Leu-293–Phe-313 form a helical membrane-spanning segment. Residues Leu-314–Val-412 lie on the Intravirion side of the membrane. Residues Asn-377–Val-412 are disordered. Residues Lys-388–Lys-397 show a composition bias toward polar residues.

This sequence belongs to the G-protein coupled receptor 1 family. As to quaternary structure, heterodimerizes with US28.

The protein localises to the virion. The protein resides in the host cell membrane. Its subcellular location is the host cytoplasm. G-protein-coupled receptor (vGPCR) that constitutively activates multiple oncogenic signaling pathways including STAT3, AP-1, phospholipase C, NF-kappa-B or cAMP-responsive element (CRE) pathways. Plays an important role in viral reactivation from latency through activation of host CREB1, facilitating its recruitment to the viral major immediate early (MIE) genes. In turn, expression of the MIE-driven genes such as UL123 are de-repressed. Also facilitates virus dissemination via the extracellular and cell-to-cell route. This chain is G-protein coupled receptor homolog UL33 (UL33), found in Human cytomegalovirus (strain Merlin) (HHV-5).